The following is a 1216-amino-acid chain: Apical endosomal glycoprotein (1216 aa).

An N-terminal signal peptide occupies residues 1-22 (MPLSSHLLPALVLFLAGSSGWA). Over 23-1151 (WVPNHCRSPG…SPGNTAAPGS (1129 aa)) the chain is Extracellular. Residues 26–53 (NHCRSPGQAVCNFVCDCRDCSDEAQCGY) form the LDL-receptor class A 1; truncated domain. Positions 64–222 (FACDFEQDPC…DDLEFWDCGL (159 aa)) constitute an MAM 1 domain. N-linked (GlcNAc...) asparagine glycosylation is present at Asn-203. In terms of domain architecture, LDL-receptor class A 2 spans 228 to 266 (NCPPGHHHCQNKVCVEPQQLCDGEDNCGDLSDENPLTCG). 3 disulfides stabilise this stretch: Cys-229–Cys-241, Cys-236–Cys-254, and Cys-248–Cys-265. Residues 269 to 425 (IATDFETGLG…DLILSDHCRP (157 aa)) form the MAM 2 domain. A disordered region spans residues 280–307 (WNRSEGWSRNHRAGGPERPSWPRRDHSR). Residues Asn-281 and Asn-339 are each glycosylated (N-linked (GlcNAc...) asparagine). Residues 429-455 (VSTLQPLPPGPRAPAPQPLPPSSRLQD) form a disordered region. Positions 434–449 (PLPPGPRAPAPQPLPP) are enriched in pro residues. An LDL-receptor class A 3 domain is found at 456 to 491 (SCKQGHLACGDLCVPPEQLCDFEEQCAGGEDEQACG). 3 cysteine pairs are disulfide-bonded: Cys-457-Cys-468, Cys-464-Cys-481, and Cys-475-Cys-490. MAM domains follow at residues 491 to 644 (GTTD…DCSP), 654 to 809 (VSCN…PCWA), 811 to 969 (NYCS…PCPQ), and 971 to 1138 (GSCD…HCQQ). Asn-583 and Asn-636 each carry an N-linked (GlcNAc...) asparagine glycan. N-linked (GlcNAc...) asparagine glycosylation is present at Asn-835. A helical membrane pass occupies residues 1152-1172 (VPAVVGSALLLLMLLVLLGLG). Topologically, residues 1173 to 1216 (GRRWLQKKGSCPFQSNTEATAPGFDNILFNADGVTLPASVTSDP) are cytoplasmic.

The protein resides in the membrane. In terms of biological role, probably involved in the sorting and selective transport of receptors and ligands across polarized epithelia. The polypeptide is Apical endosomal glycoprotein (Homo sapiens (Human)).